A 263-amino-acid chain; its full sequence is Endonuclease 8 (263 aa).

Pro-2 acts as the Schiff-base intermediate with DNA in catalysis. Glu-3 functions as the Proton donor in the catalytic mechanism. Lys-53 acts as the Proton donor; for beta-elimination activity in catalysis. Gln-70, Arg-125, and Asn-169 together coordinate DNA. The FPG-type zinc finger occupies Lys-229–Lys-263. Arg-253 (proton donor; for delta-elimination activity) is an active-site residue.

Belongs to the FPG family. Zn(2+) serves as cofactor.

The enzyme catalyses 2'-deoxyribonucleotide-(2'-deoxyribose 5'-phosphate)-2'-deoxyribonucleotide-DNA = a 3'-end 2'-deoxyribonucleotide-(2,3-dehydro-2,3-deoxyribose 5'-phosphate)-DNA + a 5'-end 5'-phospho-2'-deoxyribonucleoside-DNA + H(+). Its function is as follows. Involved in base excision repair of DNA damaged by oxidation or by mutagenic agents. Acts as a DNA glycosylase that recognizes and removes damaged bases. Has a preference for oxidized pyrimidines, such as thymine glycol, 5,6-dihydrouracil and 5,6-dihydrothymine. Has AP (apurinic/apyrimidinic) lyase activity and introduces nicks in the DNA strand. Cleaves the DNA backbone by beta-delta elimination to generate a single-strand break at the site of the removed base with both 3'- and 5'-phosphates. The sequence is that of Endonuclease 8 from Salmonella schwarzengrund (strain CVM19633).